A 225-amino-acid polypeptide reads, in one-letter code: Protein-L-isoaspartate O-methyltransferase (225 aa).

Serine 75 is an active-site residue.

This sequence belongs to the methyltransferase superfamily. L-isoaspartyl/D-aspartyl protein methyltransferase family.

It localises to the cytoplasm. The catalysed reaction is [protein]-L-isoaspartate + S-adenosyl-L-methionine = [protein]-L-isoaspartate alpha-methyl ester + S-adenosyl-L-homocysteine. Functionally, catalyzes the methyl esterification of L-isoaspartyl residues in peptides and proteins that result from spontaneous decomposition of normal L-aspartyl and L-asparaginyl residues. It plays a role in the repair and/or degradation of damaged proteins. In Xylella fastidiosa (strain 9a5c), this protein is Protein-L-isoaspartate O-methyltransferase.